The primary structure comprises 425 residues: MKYLNCFISTGLAAFFLVNSTSVLAADCSSDLTSGISTKRIYYVAPNGSSSNNGNSFNSPMSFTAAMAAANPGELILLKPGTYTIPYTQGKGNTITFNKSGKEGSPIYVAAANCGRAVFDFSFPDSQWVQASYGFYVTGDYWYFKGIEVTRAGYQGAYVTGSHNTFENTAFHHNRNTGLEINNGGSYNTVINSDAYRNYDPKKNGSMADGFGPKQKQGQGNRFGGCRAWENSDDGFDLFDSPQKVVIENSWAFRNGINYWSDSSFAGNGNGFKLGGNQAVGNHRITRSVAFGNVSKGFDQNNNAGGVTVINNTSYKNGINYGFGSNVKSGQKHYFRNNVSLSGSATVNNADAKSNSWDTGPVASASDFVSLDTSLATISRDNDGTLPETALFRLSTNSKLINAGTKESNISYSGSAPDLGAFERN.

A signal peptide spans 1-25 (MKYLNCFISTGLAAFFLVNSTSVLA). A disulfide bond links Cys-28 and Cys-114. Asp-209, Asp-233, Asp-234, and Asp-237 together coordinate Ca(2+). Lys-273 (proton acceptor) is an active-site residue. Positions 402, 413, 416, 418, and 423 each coordinate Ca(2+).

This sequence belongs to the polysaccharide lyase 9 family. Requires Ca(2+) as cofactor.

It is found in the secreted. The catalysed reaction is Eliminative cleavage of (1-&gt;4)-alpha-D-galacturonan to give oligosaccharides with 4-deoxy-alpha-D-galact-4-enuronosyl groups at their non-reducing ends.. Its pathway is glycan metabolism; pectin degradation; 2-dehydro-3-deoxy-D-gluconate from pectin: step 2/5. In terms of biological role, presents an endo-cleaving activity on polygalacturonate or partially methylated pectin. In Dickeya chrysanthemi (Pectobacterium chrysanthemi), this protein is Pectate lyase L (pelL).